The chain runs to 63 residues: uncharacterized protein (63 aa).

A helical membrane pass occupies residues 38 to 58 (ISLFIILHLCLLVCLLLSFYF).

Its subcellular location is the membrane. This is an uncharacterized protein from Saccharomyces cerevisiae (strain ATCC 204508 / S288c) (Baker's yeast).